A 1004-amino-acid chain; its full sequence is UPF0182 protein Noca_1530 (1004 aa).

The interval 1–20 is disordered; that stretch reads MSELFDEAPRDPGPPARSGS. 7 helical membrane passes run 26 to 46, 71 to 91, 120 to 140, 183 to 203, 212 to 232, 261 to 281, and 293 to 313; these read LIVT…FAGI, VLFF…IYLA, TWLL…SAIG, MAVL…YGGI, LSGA…LAKA, VLPA…LFFV, and VGLA…PGIV. Disordered regions lie at residues 899–924 and 974–1004; these read GVST…PPAT and LGQK…SPSS. Composition is skewed to low complexity over residues 903 to 916 and 979 to 1004; these read GPGT…QPGD and GSAG…SPSS.

The protein belongs to the UPF0182 family.

Its subcellular location is the cell membrane. The sequence is that of UPF0182 protein Noca_1530 from Nocardioides sp. (strain ATCC BAA-499 / JS614).